Consider the following 144-residue polypeptide: Ferredoxin-thioredoxin reductase catalytic chain, chloroplastic (144 aa).

Residues Met1–Gln31 constitute a chloroplast transit peptide. Cys83 contributes to the [4Fe-4S] cluster binding site. The active-site Nucleophile is Cys85. A disulfide bridge links Cys85 with Cys115. Positions 102, 104, and 113 each coordinate [4Fe-4S] cluster.

Belongs to the ferredoxin thioredoxin reductase beta subunit family. As to quaternary structure, heterodimer of subunit A (variable subunit) and subunit B (catalytic subunit). Heterodimeric FTR forms a complex with ferredoxin and thioredoxin. [4Fe-4S] cluster serves as cofactor.

The protein localises to the plastid. It is found in the chloroplast. It carries out the reaction [thioredoxin]-disulfide + 2 reduced [2Fe-2S]-[ferredoxin] + 2 H(+) = [thioredoxin]-dithiol + 2 oxidized [2Fe-2S]-[ferredoxin]. Catalytic subunit of the ferredoxin-thioredoxin reductase (FTR), which catalyzes the two-electron reduction of thioredoxins by the electrons provided by reduced ferredoxin. This is Ferredoxin-thioredoxin reductase catalytic chain, chloroplastic (FTRC) from Spinacia oleracea (Spinach).